The chain runs to 131 residues: Profilin (131 aa).

Belongs to the profilin family. In terms of assembly, occurs in many kinds of cells as a complex with monomeric actin in a 1:1 ratio.

Its subcellular location is the cytoplasm. The protein resides in the cytoskeleton. Functionally, binds to actin and affects the structure of the cytoskeleton. At high concentrations, profilin prevents the polymerization of actin, whereas it enhances it at low concentrations. By binding to PIP2, it inhibits the formation of IP3 and DG. The sequence is that of Profilin from Prunus dulcis (Almond).